The chain runs to 562 residues: DNA ligase (562 aa).

Residue Glu-252 participates in ATP binding. Catalysis depends on Lys-254, which acts as the N6-AMP-lysine intermediate. Arg-259, Arg-274, Glu-303, Phe-343, Arg-419, and Lys-425 together coordinate ATP.

It belongs to the ATP-dependent DNA ligase family. It depends on Mg(2+) as a cofactor.

It catalyses the reaction ATP + (deoxyribonucleotide)n-3'-hydroxyl + 5'-phospho-(deoxyribonucleotide)m = (deoxyribonucleotide)n+m + AMP + diphosphate.. DNA ligase that seals nicks in double-stranded DNA during DNA replication, DNA recombination and DNA repair. This chain is DNA ligase, found in Methanococcus aeolicus (strain ATCC BAA-1280 / DSM 17508 / OCM 812 / Nankai-3).